Reading from the N-terminus, the 78-residue chain is Acyl carrier protein (78 aa).

One can recognise a Carrier domain in the interval 2-77 (STIEERVKKI…EAIDYVTAHA (76 aa)). S37 is modified (O-(pantetheine 4'-phosphoryl)serine).

The protein belongs to the acyl carrier protein (ACP) family. In terms of processing, 4'-phosphopantetheine is transferred from CoA to a specific serine of apo-ACP by AcpS. This modification is essential for activity because fatty acids are bound in thioester linkage to the sulfhydryl of the prosthetic group.

It localises to the cytoplasm. It participates in lipid metabolism; fatty acid biosynthesis. In terms of biological role, carrier of the growing fatty acid chain in fatty acid biosynthesis. The protein is Acyl carrier protein of Ectopseudomonas mendocina (strain ymp) (Pseudomonas mendocina).